Here is a 379-residue protein sequence, read N- to C-terminus: Ribosomal RNA large subunit methyltransferase G (379 aa).

The protein belongs to the methyltransferase superfamily. RlmG family.

The protein localises to the cytoplasm. The enzyme catalyses guanosine(1835) in 23S rRNA + S-adenosyl-L-methionine = N(2)-methylguanosine(1835) in 23S rRNA + S-adenosyl-L-homocysteine + H(+). In terms of biological role, specifically methylates the guanine in position 1835 (m2G1835) of 23S rRNA. This is Ribosomal RNA large subunit methyltransferase G from Pectobacterium atrosepticum (strain SCRI 1043 / ATCC BAA-672) (Erwinia carotovora subsp. atroseptica).